A 234-amino-acid polypeptide reads, in one-letter code: MSGLPIATNLYFDAHFHRHGVKLLPNEFYTTREDMVLVTVLGSCVAACLHDPIGRIGGMNHFMLPDDGADPSAAASESMRYGAYAMEVLINELIKAGGRRERFEAKVFGGAAVLAGMTTINIGDRNADFVRRYLALERIRITAEDLQGVHPRKVAFMPHTGQAMVKKLRVQAPDVAAREAALAREAVDPHGERAPRVRPRVELFGTPAPKAQAKPRIELFGMRATQPATRKQEA.

The protein belongs to the CheD family.

The enzyme catalyses L-glutaminyl-[protein] + H2O = L-glutamyl-[protein] + NH4(+). Its function is as follows. Probably deamidates glutamine residues to glutamate on methyl-accepting chemotaxis receptors (MCPs), playing an important role in chemotaxis. The chain is Probable chemoreceptor glutamine deamidase CheD from Burkholderia mallei (strain NCTC 10247).